The following is a 483-amino-acid chain: Replication factor C large subunit (483 aa).

43 to 50 is a binding site for ATP; the sequence is GKPGIGKT. Positions 417-442 are enriched in basic and acidic residues; sequence ELKKKKKEEDAKGKKARGSKKEKEPI. The segment at 417–483 is disordered; it reads ELKKKKKEED…KSSQSTLFSF (67 aa). A compositionally biased stretch (polar residues) spans 448–457; it reads SIDSFSSQEP.

The protein belongs to the activator 1 small subunits family. RfcL subfamily. In terms of assembly, heteromultimer composed of small subunits (RfcS) and large subunits (RfcL).

Part of the RFC clamp loader complex which loads the PCNA sliding clamp onto DNA. This Methanospirillum hungatei JF-1 (strain ATCC 27890 / DSM 864 / NBRC 100397 / JF-1) protein is Replication factor C large subunit.